Consider the following 353-residue polypeptide: Fe(3+) ions import ATP-binding protein FbpC (353 aa).

Residues 9-239 (VTFENVTKKF…PASAFIADFM (231 aa)) form the ABC transporter domain. Position 41-48 (41-48 (GPSGCGKT)) interacts with ATP.

This sequence belongs to the ABC transporter superfamily. Fe(3+) ion importer (TC 3.A.1.10) family. As to quaternary structure, the complex is composed of two ATP-binding proteins (FbpC), two transmembrane proteins (FbpB) and a solute-binding protein (FbpA).

Its subcellular location is the cell inner membrane. The catalysed reaction is Fe(3+)(out) + ATP + H2O = Fe(3+)(in) + ADP + phosphate + H(+). Functionally, part of the ABC transporter complex FbpABC involved in Fe(3+) ions import. Responsible for energy coupling to the transport system. The sequence is that of Fe(3+) ions import ATP-binding protein FbpC from Brucella suis biovar 1 (strain 1330).